We begin with the raw amino-acid sequence, 266 residues long: MSEKKKVLMLHGFVQSDKIFSAKTGGLRKNLKKLGYDLYYPCAPHSIDKKALFQSESEKGRDAAKEFNTSATSDEVYGWFFRNPESFNSFQIDQKVFNYLRNYVLENGPFDGVIGFSQGAGLGGYLVTDFNRILNLTDEQQPALKFFISFSGFKLEDQSYQKEYHRIIQVPSLHVRGELDEVVAESRIMALYESWPDNKRTLLVHPGAHFVPNSKPFVSQVCNWIQGITSKEGQEHNAQPEVDRKQFDKPQLEDDLLDMIDSLGKL.

Catalysis depends on charge relay system residues Ser117, Asp180, and His209.

The protein belongs to the AB hydrolase 3 family.

In terms of biological role, serine hydrolase of unknown specificity. The polypeptide is Family of serine hydrolases 3 (FSH3) (Saccharomyces cerevisiae (strain ATCC 204508 / S288c) (Baker's yeast)).